The sequence spans 261 residues: Phosphate import ATP-binding protein PstB (261 aa).

The ABC transporter domain maps to 15–256 (LQVRRLNFYY…PAHQETENYI (242 aa)). 47 to 54 (GPSGCGKS) serves as a coordination point for ATP.

This sequence belongs to the ABC transporter superfamily. Phosphate importer (TC 3.A.1.7) family. In terms of assembly, the complex is composed of two ATP-binding proteins (PstB), two transmembrane proteins (PstC and PstA) and a solute-binding protein (PstS).

It is found in the cell inner membrane. The enzyme catalyses phosphate(out) + ATP + H2O = ADP + 2 phosphate(in) + H(+). Part of the ABC transporter complex PstSACB involved in phosphate import. Responsible for energy coupling to the transport system. The sequence is that of Phosphate import ATP-binding protein PstB from Burkholderia sp.